We begin with the raw amino-acid sequence, 565 residues long: Thiol:disulfide interchange protein DsbD (565 aa).

A signal peptide spans 1-19 (MAQRIFTLILLLCSTSVFA). Intrachain disulfides connect Cys-122-Cys-128 and Cys-182-Cys-304. Transmembrane regions (helical) follow at residues 163–183 (LPFSALWALLIGIGIAFTPCV), 208–228 (LLTFIYVQGMALTYTALGLVV), 243–263 (YVLIGLAIVFTLLAMSMFGLF), 296–316 (IAGLICSPCTTAPLSAILLYI), 323–343 (WLGGGTLYLYALGMGLPLMLI), 365–385 (FGFVILALPVFLLERVIGDIW), and 386–406 (GLRLWSALGVAFFGGAFITSL). Positions 434–565 (WAFGATHTAQ…FSAHLRDRQP (132 aa)) constitute a Thioredoxin domain. A disulfide bridge connects residues Cys-480 and Cys-483.

The protein belongs to the thioredoxin family. DsbD subfamily.

The protein resides in the cell inner membrane. It carries out the reaction [protein]-dithiol + NAD(+) = [protein]-disulfide + NADH + H(+). The enzyme catalyses [protein]-dithiol + NADP(+) = [protein]-disulfide + NADPH + H(+). Functionally, required to facilitate the formation of correct disulfide bonds in some periplasmic proteins and for the assembly of the periplasmic c-type cytochromes. Acts by transferring electrons from cytoplasmic thioredoxin to the periplasm. This transfer involves a cascade of disulfide bond formation and reduction steps. This chain is Thiol:disulfide interchange protein DsbD, found in Shigella dysenteriae serotype 1 (strain Sd197).